The following is an 86-amino-acid chain: Large ribosomal subunit protein bL27 (86 aa).

The segment covering 1–11 has biased composition (gly residues); sequence MATKKAGGGSR. Residues 1–24 are disordered; the sequence is MATKKAGGGSRNGRDSAGRRLGVK.

Belongs to the bacterial ribosomal protein bL27 family.

The polypeptide is Large ribosomal subunit protein bL27 (Rickettsia africae (strain ESF-5)).